Here is an 83-residue protein sequence, read N- to C-terminus: Small ribosomal subunit protein bS16 (83 aa).

This sequence belongs to the bacterial ribosomal protein bS16 family.

The protein is Small ribosomal subunit protein bS16 of Borrelia duttonii (strain Ly).